The sequence spans 230 residues: 2,3-bisphosphoglycerate-dependent phosphoglycerate mutase 1 (230 aa).

Substrate contacts are provided by residues 8–15 (RHGQSEWN), 21–22 (TG), Arg60, 87–90 (ERHY), Lys98, 114–115 (RR), and 183–184 (GN). The Tele-phosphohistidine intermediate role is filled by His9. Residue Glu87 is the Proton donor/acceptor of the active site.

The protein belongs to the phosphoglycerate mutase family. BPG-dependent PGAM subfamily.

The catalysed reaction is (2R)-2-phosphoglycerate = (2R)-3-phosphoglycerate. The protein operates within carbohydrate degradation; glycolysis; pyruvate from D-glyceraldehyde 3-phosphate: step 3/5. Its function is as follows. Catalyzes the interconversion of 2-phosphoglycerate and 3-phosphoglycerate. The sequence is that of 2,3-bisphosphoglycerate-dependent phosphoglycerate mutase 1 from Lactobacillus johnsonii (strain CNCM I-12250 / La1 / NCC 533).